The chain runs to 374 residues: Phosphatidyl-myo-inositol mannosyltransferase (374 aa).

GDP-alpha-D-mannose contacts are provided by Tyr-9 and Gly-16. Residues Gln-18, 62-63 (YN), and Arg-68 each bind a 1,2-diacyl-sn-glycero-3-phospho-(1D-myo-inositol). Residues Arg-196, 201–202 (RK), 251–253 (VDD), Lys-256, 274–278 (ESFGI), and Glu-282 each bind GDP-alpha-D-mannose.

Belongs to the glycosyltransferase group 1 family. Glycosyltransferase 4 subfamily. In terms of assembly, monomer. Requires Mg(2+) as cofactor.

It localises to the cell membrane. The enzyme catalyses a 1,2-diacyl-sn-glycero-3-phospho-(1D-myo-inositol) + GDP-alpha-D-mannose = a 1,2-diacyl-sn-glycero-3-phospho-[alpha-D-mannopyranosyl-(1&lt;-&gt;6)-D-myo-inositol] + GDP + H(+). It functions in the pathway phospholipid metabolism; phosphatidylinositol metabolism. In terms of biological role, involved in the biosynthesis of phosphatidyl-myo-inositol mannosides (PIM) which are early precursors in the biosynthesis of lipomannans (LM) and lipoarabinomannans (LAM). Catalyzes the addition of a mannosyl residue from GDP-D-mannose (GDP-Man) to the position 2 of the carrier lipid phosphatidyl-myo-inositol (PI) to generate a phosphatidyl-myo-inositol bearing an alpha-1,2-linked mannose residue (PIM1). In Mycobacterium leprae (strain TN), this protein is Phosphatidyl-myo-inositol mannosyltransferase.